The following is a 643-amino-acid chain: Protein THEMIS2 (643 aa).

2 CABIT regions span residues 1–238 (MEPV…TASS) and 239–514 (RHVH…KAKG). The disordered stretch occupies residues 546-631 (EIQAPPPRPP…RQDLDDDEHD (86 aa)). A Phosphothreonine modification is found at Thr-593. Positions 609–619 (PAHRKGHRPAK) are enriched in basic residues. Residue Tyr-632 is modified to Phosphotyrosine.

It belongs to the themis family. In terms of assembly, interacts with VAV1. Interacts with LAT. Interacts constitutively with GRB2, LYN and PLCG2; these interactions increase the activation of PLCG2 and its downstream pathways following B cell receptor stimulation. Post-translationally, phosphorylation at Tyr-632 is induced by LPS. Phosphorylated by Src kinases (Lck or Fyn) following BCR engagement. As to expression, expressed in different endometrial adenocarcinoma cell lines and various other cell lines apart from the prostate cell line LNCaP and the ovarian cancer cell line BG1.

Its subcellular location is the nucleus. It localises to the cytoplasm. Functionally, may constitute a control point in macrophage inflammatory response, promoting LPS-induced TLR4-mediated TNF production. Determines the threshold for activation of B cells by low-affinity and low-avidity ligands via PLCG2 activation and its downstream pathways. This is Protein THEMIS2 from Homo sapiens (Human).